The primary structure comprises 614 residues: FAD-linked oxidoreductase ffsJ (614 aa).

A signal peptide spans 1–19 (MRLTRALTPAILALPAAHA). N-linked (GlcNAc...) asparagine glycans are attached at residues Asn30, Asn53, Asn72, and Asn114. Positions 119–301 (TGSLPAYYID…LSSTHRVEPE (183 aa)) constitute an FAD-binding PCMH-type domain. 6 N-linked (GlcNAc...) asparagine glycosylation sites follow: Asn314, Asn329, Asn461, Asn465, Asn478, and Asn514. A disordered region spans residues 453–495 (NGHGRSNNNNSNNSSTSTSTSTSSKNGSVKPYAYGGKETTSST). The segment covering 456–480 (GRSNNNNSNNSSTSTSTSTSSKNGS) has biased composition (low complexity).

It belongs to the oxygen-dependent FAD-linked oxidoreductase family. It depends on FAD as a cofactor.

It functions in the pathway mycotoxin biosynthesis. FAD-linked oxidoreductase; part of the gene cluster that mediates the biosynthesis of the cytotoxic leucine-containing cytochalasans, including aspochalasin C, aspochalasin E, TMC-169, flavichalasine F, aspergillin PZ, aspochalasin M and flavichalasine G. The first step in the pathway is catalyzed by the hybrid PKS-NRPS ffsA that utilizes 8 units of malonyl-CoA to iteratively assemble the octaketide chain before addition of L-leucine by the C-terminal NRPS modules. Because ffsA lacks a designated enoylreductase (ER) domain, the required activity is provided the enoyl reductase fssC. The methyltransferase (MT) domain of ffsA catalyzes the alpha-methylation at C10 and C14 using S-adenosyl-L-methionine as the methyl-donating cosubstrate. Reduction by the hydrolyase ffsE, followed by dehydration and intra-molecular Diels-Alder cyclization by the Diels-Alderase ffsF then yield the required isoindolone-fused macrocycle. A number of oxidative steps catalyzed by the tailoring cytochrome P450 monooxygenase ffsD, the FAD-linked oxidoreductase ffsJ and the short-chain dehydrogenase/reductase ffsI, are further required to afford the final products. This Aspergillus flavipes protein is FAD-linked oxidoreductase ffsJ.